A 415-amino-acid polypeptide reads, in one-letter code: Tyrosine--tRNA ligase (415 aa).

The short motif at 54–63 (PTGSNIHLGH) is the 'HIGH' region element. Positions 248–252 (KMSKS) match the 'KMSKS' region motif. K251 contacts ATP. The region spanning 351–415 (AKAFYLLSAV…GKKTFRRLTA (65 aa)) is the S4 RNA-binding domain.

Belongs to the class-I aminoacyl-tRNA synthetase family. TyrS type 2 subfamily. In terms of assembly, homodimer.

The protein localises to the cytoplasm. It catalyses the reaction tRNA(Tyr) + L-tyrosine + ATP = L-tyrosyl-tRNA(Tyr) + AMP + diphosphate + H(+). Its function is as follows. Catalyzes the attachment of tyrosine to tRNA(Tyr) in a two-step reaction: tyrosine is first activated by ATP to form Tyr-AMP and then transferred to the acceptor end of tRNA(Tyr). This chain is Tyrosine--tRNA ligase, found in Parasynechococcus marenigrum (strain WH8102).